Consider the following 625-residue polypeptide: BTB/POZ domain-containing protein At5g48130 (625 aa).

The BTB domain maps to Ala-41–Pro-105. The 253-residue stretch at Asp-217–Asn-469 folds into the NPH3 domain. The span at Val-494–Cys-507 shows a compositional bias: polar residues. The tract at residues Val-494–Gly-513 is disordered.

Belongs to the NPH3 family.

It participates in protein modification; protein ubiquitination. Functionally, may act as a substrate-specific adapter of an E3 ubiquitin-protein ligase complex (CUL3-RBX1-BTB) which mediates the ubiquitination and subsequent proteasomal degradation of target proteins. In Arabidopsis thaliana (Mouse-ear cress), this protein is BTB/POZ domain-containing protein At5g48130.